The following is a 159-amino-acid chain: Cyclic pyranopterin monophosphate synthase (159 aa).

Residues 76–78 (LCH) and 114–115 (ME) each bind substrate. Asp129 is a catalytic residue.

The protein belongs to the MoaC family. Homohexamer; trimer of dimers.

The enzyme catalyses (8S)-3',8-cyclo-7,8-dihydroguanosine 5'-triphosphate = cyclic pyranopterin phosphate + diphosphate. Its pathway is cofactor biosynthesis; molybdopterin biosynthesis. In terms of biological role, catalyzes the conversion of (8S)-3',8-cyclo-7,8-dihydroguanosine 5'-triphosphate to cyclic pyranopterin monophosphate (cPMP). The sequence is that of Cyclic pyranopterin monophosphate synthase from Psychromonas ingrahamii (strain DSM 17664 / CCUG 51855 / 37).